A 458-amino-acid chain; its full sequence is Argininosuccinate lyase (458 aa).

This sequence belongs to the lyase 1 family. Argininosuccinate lyase subfamily.

It is found in the cytoplasm. The enzyme catalyses 2-(N(omega)-L-arginino)succinate = fumarate + L-arginine. It participates in amino-acid biosynthesis; L-arginine biosynthesis; L-arginine from L-ornithine and carbamoyl phosphate: step 3/3. The polypeptide is Argininosuccinate lyase (Salmonella typhi).